Consider the following 390-residue polypeptide: Na(+)/H(+) antiporter NhaA (390 aa).

11 helical membrane-spanning segments follow: residues 13–33, 61–81, 99–119, 129–149, 158–178, 181–201, 209–229, 259–279, 297–317, 330–350, and 367–387; these read FQLEAASGLVLLIAAIIALVI, LSVHHWINDLLMAIFFFFVTL, LLPIIGAVGGMVVPALVYVFI, GWAIPSATDIAFSLGILSLLG, VFLTALAIIDDLGAILIIAFF, GDLSISYLSLILISYILLLTL, FIPYLIIGAFMWFFTYKSGIH, AISPYVAFIIMPIFAFANAGV, ILLGLFVGKQVGVMVVSFIAV, WLSLYGVSILTGVGFTMSLFV, and IGVLAGSLLSTVFGYFILLYA.

It belongs to the NhaA Na(+)/H(+) (TC 2.A.33) antiporter family.

The protein resides in the cell inner membrane. It catalyses the reaction Na(+)(in) + 2 H(+)(out) = Na(+)(out) + 2 H(+)(in). Na(+)/H(+) antiporter that extrudes sodium in exchange for external protons. This Pelagibacter ubique (strain HTCC1062) protein is Na(+)/H(+) antiporter NhaA.